We begin with the raw amino-acid sequence, 721 residues long: Protein Hook homolog 2 (721 aa).

The Calponin-homology (CH) domain maps to 7 to 123 (VELCDSLLTW…KMVQLVLGCA (117 aa)). Coiled-coil stretches lie at residues 181–425 (LSED…RCSH) and 484–659 (DLQN…EKLI). The disordered stretch occupies residues 696–721 (TNARRGQISRSHTLLPRYTDKRQSLS).

The protein belongs to the hook family. Interacts with microtubules.

The protein localises to the cytoplasm. It localises to the cytoskeleton. It is found in the microtubule organizing center. Its subcellular location is the centrosome. Functionally, may function to promote vesicle trafficking and/or fusion. May contribute to the establishment and maintenance of centrosome function. This Xenopus laevis (African clawed frog) protein is Protein Hook homolog 2 (hook2).